Reading from the N-terminus, the 128-residue chain is Holin-like protein CidA (128 aa).

4 consecutive transmembrane segments (helical) span residues Leu-4–Val-24, Ala-26–Leu-46, Gly-59–Ile-79, and Phe-88–Gly-108.

This sequence belongs to the CidA/LrgA family. CidA subfamily.

Its subcellular location is the cell membrane. Functionally, increases the activity of extracellular murein hydrolases possibly by mediating their export via hole formation. Inhibited by the antiholin-like proteins LrgAB. In an unstressed cell, the LrgAB products probably inhibit the function of the CidA protein. When a cell is stressed by the addition of antibiotics or by other factors in the environment, CidA possibly oligomerizes within the bacterial cell membrane, creating lesions that disrupt the proton motive force, which in turn results in loss of cell viability. These lesions are also hypothesized to regulate the subsequent cell lysis by either allowing the murein hydrolases access to the cell wall substrate and/or regulating their activity by a possible change in the cell wall pH that results from loss of membrane potential. In Bacillus subtilis (strain 168), this protein is Holin-like protein CidA.